We begin with the raw amino-acid sequence, 175 residues long: Cytochrome c homolog (175 aa).

Over 1 to 8 (MSGKELNK) the chain is Cytoplasmic. Residues 9-29 (IVAAILFASLIAMMVGFVANI) traverse the membrane as a helical; Signal-anchor segment. The Periplasmic portion of the chain corresponds to 30 to 175 (LYKPTLELQH…LFLKTYVHDK (146 aa)). Cys-84, Cys-87, His-88, and Met-150 together coordinate heme c.

This sequence belongs to the cytochrome c family. Binds 1 heme c group covalently per subunit.

The protein localises to the cell membrane. In terms of biological role, may be involved in electron transfer from bc1 complex to aa3. This Rickettsia felis (strain ATCC VR-1525 / URRWXCal2) (Rickettsia azadi) protein is Cytochrome c homolog (cycM).